A 285-amino-acid polypeptide reads, in one-letter code: 3-methyl-2-oxobutanoate hydroxymethyltransferase 1 (285 aa).

Residues D49 and D88 each contribute to the Mg(2+) site. 3-methyl-2-oxobutanoate-binding positions include 49–50 (DS), D88, and K118. A Mg(2+)-binding site is contributed by E120. The active-site Proton acceptor is the E187.

This sequence belongs to the PanB family. As to quaternary structure, homodecamer; pentamer of dimers. The cofactor is Mg(2+).

The protein localises to the cytoplasm. The catalysed reaction is 3-methyl-2-oxobutanoate + (6R)-5,10-methylene-5,6,7,8-tetrahydrofolate + H2O = 2-dehydropantoate + (6S)-5,6,7,8-tetrahydrofolate. The protein operates within cofactor biosynthesis; (R)-pantothenate biosynthesis; (R)-pantoate from 3-methyl-2-oxobutanoate: step 1/2. In terms of biological role, catalyzes the reversible reaction in which hydroxymethyl group from 5,10-methylenetetrahydrofolate is transferred onto alpha-ketoisovalerate to form ketopantoate. The chain is 3-methyl-2-oxobutanoate hydroxymethyltransferase 1 from Burkholderia lata (strain ATCC 17760 / DSM 23089 / LMG 22485 / NCIMB 9086 / R18194 / 383).